The following is a 126-amino-acid chain: Small ribosomal subunit protein uS13 (126 aa).

The interval 92 to 126 (HRMGLPVRGQRTRTNARTRRGRRQTVAGKKKAPGK) is disordered. A compositionally biased stretch (basic residues) spans 101–126 (QRTRTNARTRRGRRQTVAGKKKAPGK).

It belongs to the universal ribosomal protein uS13 family. As to quaternary structure, part of the 30S ribosomal subunit. Forms a loose heterodimer with protein S19. Forms two bridges to the 50S subunit in the 70S ribosome.

In terms of biological role, located at the top of the head of the 30S subunit, it contacts several helices of the 16S rRNA. In the 70S ribosome it contacts the 23S rRNA (bridge B1a) and protein L5 of the 50S subunit (bridge B1b), connecting the 2 subunits; these bridges are implicated in subunit movement. Contacts the tRNAs in the A and P-sites. The polypeptide is Small ribosomal subunit protein uS13 (Nostoc punctiforme (strain ATCC 29133 / PCC 73102)).